The following is a 388-amino-acid chain: Chorismate synthase (388 aa).

NADP(+) is bound by residues arginine 39 and arginine 45. A disordered region spans residues 95-118 (EKNEKSRRVSRPRPGHADLVGGMK). Residues 130–132 (RSS), 251–252 (NA), glycine 296, 311–315 (KPIPT), and arginine 337 each bind FMN.

This sequence belongs to the chorismate synthase family. Homotetramer. It depends on FMNH2 as a cofactor.

The enzyme catalyses 5-O-(1-carboxyvinyl)-3-phosphoshikimate = chorismate + phosphate. The protein operates within metabolic intermediate biosynthesis; chorismate biosynthesis; chorismate from D-erythrose 4-phosphate and phosphoenolpyruvate: step 7/7. Catalyzes the anti-1,4-elimination of the C-3 phosphate and the C-6 proR hydrogen from 5-enolpyruvylshikimate-3-phosphate (EPSP) to yield chorismate, which is the branch point compound that serves as the starting substrate for the three terminal pathways of aromatic amino acid biosynthesis. This reaction introduces a second double bond into the aromatic ring system. In Listeria monocytogenes serotype 4b (strain F2365), this protein is Chorismate synthase.